Here is a 436-residue protein sequence, read N- to C-terminus: ATP-dependent protease ATPase subunit HslU (436 aa).

Residues isoleucine 19, 61-66 (GVGKTE), aspartate 249, glutamate 314, and arginine 386 each bind ATP.

It belongs to the ClpX chaperone family. HslU subfamily. A double ring-shaped homohexamer of HslV is capped on each side by a ring-shaped HslU homohexamer. The assembly of the HslU/HslV complex is dependent on binding of ATP.

It localises to the cytoplasm. Functionally, ATPase subunit of a proteasome-like degradation complex; this subunit has chaperone activity. The binding of ATP and its subsequent hydrolysis by HslU are essential for unfolding of protein substrates subsequently hydrolyzed by HslV. HslU recognizes the N-terminal part of its protein substrates and unfolds these before they are guided to HslV for hydrolysis. This is ATP-dependent protease ATPase subunit HslU from Bartonella bacilliformis (strain ATCC 35685 / KC583 / Herrer 020/F12,63).